We begin with the raw amino-acid sequence, 114 residues long: Lymphotactin (114 aa).

The N-terminal stretch at 1-21 (MRLLLLTFLGVCCFAAWVVEG) is a signal peptide. Cys32 and Cys69 are joined by a disulfide. Positions 87-114 (RASASKSKAETIPTQAQRSASTAVTLTG) are disordered. Positions 98-114 (IPTQAQRSASTAVTLTG) are enriched in polar residues.

It belongs to the intercrine gamma family.

It is found in the secreted. Chemotactic activity for lymphocytes but not for monocytes or neutrophils. In thymus, mediates medullary accumulation of thymic dendritic cells and contributes to regulatoy T cell development, playing a role in self-tolerance establishment. This is Lymphotactin (Xcl1) from Rattus norvegicus (Rat).